The sequence spans 348 residues: NADH-ubiquinone oxidoreductase chain 2 (348 aa).

9 consecutive transmembrane segments (helical) span residues 1–21 (MSPYITASLLFGLLLGPTITA), 60–80 (FLTQATAAAMLLFASTTNAWL), 96–116 (TLIILALALKIGLAPLHTWLP), 149–169 (NPTLLVILGVLSTLIGGWGGL), 177–194 (ILAYSSIAHLGWMILILQ), 198–220 (TLTLLTLMLYLIMTSSAFLTFIL), 238–258 (ILTSLLPLVLLSLGGLPPLTG), 273–293 (DLAPTATLAALSALLSLYFYL), and 328–348 (MAASSILLLPMTPGILTLFNI).

The protein belongs to the complex I subunit 2 family.

It is found in the mitochondrion inner membrane. The enzyme catalyses a ubiquinone + NADH + 5 H(+)(in) = a ubiquinol + NAD(+) + 4 H(+)(out). In terms of biological role, core subunit of the mitochondrial membrane respiratory chain NADH dehydrogenase (Complex I) that is believed to belong to the minimal assembly required for catalysis. Complex I functions in the transfer of electrons from NADH to the respiratory chain. The immediate electron acceptor for the enzyme is believed to be ubiquinone. The sequence is that of NADH-ubiquinone oxidoreductase chain 2 (MT-ND2) from Tetraodon nigroviridis (Spotted green pufferfish).